The chain runs to 530 residues: PTS system maltose-specific EIICB component (530 aa).

One can recognise a PTS EIIC type-1 domain in the interval 1-431 (MTAKTAPKVT…FNLKTPGRDS (431 aa)). 10 consecutive transmembrane segments (helical) span residues 22–42 (FMLP…GSSL), 69–89 (IGSF…PLGL), 96–116 (VAAF…NFWL), 138–158 (ILGI…GIIV), 189–209 (LVMG…AMGI), 289–309 (FLSQ…ALAM), 321–341 (IKGL…TEPL), 343–363 (FLFL…TGLG), 369–389 (VLGV…VFGI), and 399–419 (MVPV…RFAI). The PTS EIIB type-1 domain maps to 449–530 (GYNVPAILEA…MAGLMHTVQA (82 aa)). Catalysis depends on cysteine 471, which acts as the Phosphocysteine intermediate; for EIIB activity.

Its subcellular location is the cell inner membrane. It carries out the reaction D-maltose(out) + N(pros)-phospho-L-histidyl-[protein] = alpha-maltose 6'-phosphate(in) + L-histidyl-[protein]. Functionally, the phosphoenolpyruvate-dependent sugar phosphotransferase system (sugar PTS), a major carbohydrate active transport system, catalyzes the phosphorylation of incoming sugar substrates concomitantly with their translocation across the cell membrane. This system is involved in maltose transport. MalX can also recognize and transport glucose even though this sugar may not represent the natural substrate of the system. The sequence is that of PTS system maltose-specific EIICB component from Escherichia coli (strain K12).